The primary structure comprises 847 residues: Glucans biosynthesis glucosyltransferase H (847 aa).

Residues 1–138 (MNKTTEYIDA…KWRTVGTIRR (138 aa)) are Cytoplasmic-facing. The chain crosses the membrane as a helical span at residues 139–156 (YILLILTLAQTVVATWYM). Residues 157 to 193 (KTILPYQGWALINPMDMVGQDVWVSFMQLLPYMLQTG) are Periplasmic-facing. The chain crosses the membrane as a helical span at residues 194–216 (ILILFAVLFCWVSAGFWTALMGF). The Cytoplasmic portion of the chain corresponds to 217–511 (LQLLIGRDKY…LVKGMHPVHR (295 aa)). The chain crosses the membrane as a helical span at residues 512 to 534 (AVFLTGVMSYLSAPLWFMFLALS). Over 535–567 (TALQVVHALTEPQYFLQPRQLFPVWPQWRPELA) the chain is Periplasmic. The chain crosses the membrane as a helical span at residues 568-590 (IALFASTMVLLFLPKLLSILLIW). The Cytoplasmic portion of the chain corresponds to 591–602 (CKGTKEYGGFWR). The chain crosses the membrane as a helical span at residues 603–625 (VTLSLLLEVLFSVLLAPVRMLFH). The Periplasmic segment spans residues 626-679 (TVFVVSAFLGWEVVWNSPQRDDDSTSWGEAFKRHGSQLLLGLVWAVGMAWLDLR). A helical transmembrane segment spans residues 680–702 (FLFWLAPIVFSLILSPFVSVISS). At 703-847 (RATVGLRTKR…ALRKPDAASQ (145 aa)) the chain is on the cytoplasmic side.

Belongs to the glycosyltransferase 2 family. OpgH subfamily.

It localises to the cell inner membrane. It functions in the pathway glycan metabolism; osmoregulated periplasmic glucan (OPG) biosynthesis. Involved in the biosynthesis of osmoregulated periplasmic glucans (OPGs). The polypeptide is Glucans biosynthesis glucosyltransferase H (Escherichia coli O6:H1 (strain CFT073 / ATCC 700928 / UPEC)).